A 234-amino-acid polypeptide reads, in one-letter code: Matrix protein 1 (234 aa).

Positions 1–103 (MHERSKPKTT…QELAEGGIRM (103 aa)) are disordered. Residues 76-96 (CDERSTIGRHGNADERPHQEL) show a composition bias toward basic and acidic residues. The stretch at 183–234 (PEVSFKERMEAEKKKLKELDDKIYKLRRRLRKMEYKKMGINREIDKLEDSVQ) forms a coiled coil.

As to quaternary structure, interacts with host HSC70.

Its subcellular location is the virion. The protein resides in the host cytoplasm. It is found in the host nucleus. In terms of biological role, may play a role in virus replication, from virus entry and uncoating to assembly and budding of the virus particle. Interaction of viral NEP with M1-Hsc70 is thought to promote nuclear export of the viral encapsidated genomes. This is Matrix protein 1 from Infectious salmon anemia virus (isolate Atlantic salmon/Norway/810/9/99) (ISAV).